The chain runs to 596 residues: Uptake hydrogenase large subunit (596 aa).

4 residues coordinate Ni(2+): Cys75, Cys78, Cys575, and Cys578.

This sequence belongs to the [NiFe]/[NiFeSe] hydrogenase large subunit family. In terms of assembly, heterodimer of a large and a small subunit. Ni(2+) is required as a cofactor.

The protein resides in the cell membrane. The catalysed reaction is H2 + A = AH2. In terms of biological role, this enzyme recycles the H(2) produced by nitrogenase to increase the production of ATP and to protect nitrogenase against inhibition or damage by O(2) under carbon- or phosphate-limited conditions. This Bradyrhizobium diazoefficiens (strain JCM 10833 / BCRC 13528 / IAM 13628 / NBRC 14792 / USDA 110) protein is Uptake hydrogenase large subunit (hupB).